Reading from the N-terminus, the 273-residue chain is 4-hydroxy-tetrahydrodipicolinate reductase (273 aa).

NAD(+) contacts are provided by residues 12 to 17 and Glu-38; that span reads GAGGRM. Arg-39 contributes to the NADP(+) binding site. Residues 102-104 and 126-129 each bind NAD(+); these read GTT and AANF. The active-site Proton donor/acceptor is His-159. (S)-2,3,4,5-tetrahydrodipicolinate is bound at residue His-160. Lys-163 serves as the catalytic Proton donor. (S)-2,3,4,5-tetrahydrodipicolinate is bound at residue 169 to 170; the sequence is GT.

This sequence belongs to the DapB family. Homotetramer.

It localises to the cytoplasm. It catalyses the reaction (S)-2,3,4,5-tetrahydrodipicolinate + NAD(+) + H2O = (2S,4S)-4-hydroxy-2,3,4,5-tetrahydrodipicolinate + NADH + H(+). The catalysed reaction is (S)-2,3,4,5-tetrahydrodipicolinate + NADP(+) + H2O = (2S,4S)-4-hydroxy-2,3,4,5-tetrahydrodipicolinate + NADPH + H(+). It functions in the pathway amino-acid biosynthesis; L-lysine biosynthesis via DAP pathway; (S)-tetrahydrodipicolinate from L-aspartate: step 4/4. Functionally, catalyzes the conversion of 4-hydroxy-tetrahydrodipicolinate (HTPA) to tetrahydrodipicolinate. In Yersinia pseudotuberculosis serotype O:1b (strain IP 31758), this protein is 4-hydroxy-tetrahydrodipicolinate reductase.